Here is a 397-residue protein sequence, read N- to C-terminus: MSELKLDPYFGEYGGMYVPQILMPALKQLETAFVEAQQDPEFLTEFHDLLKNYAGRPTALTLTRNLSPNPKVKIYLKREDLLHGGAHKTNQVLGQALLAKRMGKKEIIAETGAGQHGVATALACALLGLKCKVYMGAKDVARQSPNVFRMRLMGAEVIPVTSGSATLKDACNEAMRDWSGSYDRAHYLLGTAAGPHPFPTIVREFQRMIGAETKAQMLEKEGRLPDAVIACVGGGSNAIGMFADFIDEPSVKLIGVEPAGKGIDTPMHGAPLKHGKTGIFFGMKAPLMQDAHGQIEESYSISAGLDFPSVGPQHAYLNATGRATYESATDDEALEAFQLLARSEGIIPALESAHALAYALRLAKDATEEQIIVVNLSGRGDKDIFTVSDILDGKASA.

Lys-88 is modified (N6-(pyridoxal phosphate)lysine).

It belongs to the TrpB family. In terms of assembly, tetramer of two alpha and two beta chains. Requires pyridoxal 5'-phosphate as cofactor.

The enzyme catalyses (1S,2R)-1-C-(indol-3-yl)glycerol 3-phosphate + L-serine = D-glyceraldehyde 3-phosphate + L-tryptophan + H2O. Its pathway is amino-acid biosynthesis; L-tryptophan biosynthesis; L-tryptophan from chorismate: step 5/5. Functionally, the beta subunit is responsible for the synthesis of L-tryptophan from indole and L-serine. This is Tryptophan synthase beta chain from Shewanella amazonensis (strain ATCC BAA-1098 / SB2B).